Here is a 264-residue protein sequence, read N- to C-terminus: Probable metallo-hydrolase YflN (264 aa).

Residues histidine 80, histidine 82, aspartate 84, histidine 85, histidine 169, aspartate 188, and histidine 241 each contribute to the Zn(2+) site.

Belongs to the metallo-beta-lactamase superfamily. The cofactor is Zn(2+).

The sequence is that of Probable metallo-hydrolase YflN (yflN) from Bacillus subtilis (strain 168).